An 855-amino-acid chain; its full sequence is Transcription factor gaf1 (855 aa).

The segment covering 72–112 has biased composition (polar residues); the sequence is KNLTPNGDSNTLTPDTFSDPTAPSSAQSVPPTSSAETTADN. 6 disordered regions span residues 72-126, 149-184, 229-287, 412-483, 602-643, and 680-768; these read KNLT…PAYS, TSFDESTAKSKKRSIADSHFPDPNAMQRPHDLESQP, SHNL…GFPS, PNSN…DMFS, NKNA…TRTT, and KKRN…SQSM. Basic and acidic residues predominate over residues 149–168; it reads TSFDESTAKSKKRSIADSHF. Residue Ser-150 is modified to Phosphoserine. Composition is skewed to low complexity over residues 240–250 and 428–444; these read PANSNNSASPN and NSSKSVGQGSSGVDSNQ. The segment covering 445–476 has biased composition (polar residues); it reads ENAESFNPSISSHNSAEWASGETTGHSSNSPL. Positions 614-623 are enriched in basic and acidic residues; the sequence is AEDKKGDANT. Composition is skewed to low complexity over residues 625–643 and 707–717; these read RANATNPTPTCTNCQTRTT and SKSSSAKSTAA. The GATA-type zinc-finger motif lies at 635–659; sequence CTNCQTRTTPLWRRSPDGQPLCNAC. A phosphoserine mark is found at Ser-727 and Ser-729. The segment covering 755–767 has biased composition (low complexity); sequence QQQSSENESKSQS.

The protein localises to the nucleus. Its function is as follows. Transcriptional activator. The protein is Transcription factor gaf1 (gaf1) of Schizosaccharomyces pombe (strain 972 / ATCC 24843) (Fission yeast).